The chain runs to 433 residues: Inorganic triphosphatase (433 aa).

One can recognise a CYTH domain in the interval 2 to 202; that stretch reads AQEIELKFIV…ARGYHLAQGN (201 aa). The CHAD domain maps to 218-433; sequence KADVEQGLEA…EPFWLHSGKR (216 aa).

The catalysed reaction is triphosphate + H2O = phosphate + diphosphate. With respect to regulation, inhibited by calcium ion and activated by magnesium ion. Its function is as follows. Involved in the hydrolysis of the beta-gamma-phosphoanhydride linkage of triphosphate-containing substrates (inorganic or nucleoside-linked). Catalyzes the hydrolysis of inorganic triphosphate (PPPi), which could be cytotoxic because of its high affinity for calcium ion, thereby interfering with calcium signaling. It also hydrolyzes slowly thiamine triphosphate (ThTP). YgiF is a specific PPPase, but it contributes only marginally to the total PPPase activity in E.coli, where the main enzyme responsible for hydrolysis of PPPi is inorganic pyrophosphatase (PPase). In Escherichia coli (strain K12), this protein is Inorganic triphosphatase (ygiF).